The sequence spans 1845 residues: MSLRGPMKRSHLRQVSAPSVDDLATSSQAQAQSHPRDGGPYNDEHGQDFQSTLDARNIRLSTTSLERRQVSLWVHDETFSREEILFNQAAFSDLGVGPGDVIEILPVRSPGDSLHSIKSDLGLRALRDSYVETGPALLPDPMSKFKTPLQSRCLFVVKPLPQEIKARHPKLEISVTSSVANIFGFKNRTLVHIDVVDRAQCSASHVDIAFRDQFLVRSDMWRLVMSELAEKIIYKGQKIVFMGSIKATVKNIFIREKKVLSGYFSPHTIPVFRSESAKYVLFIQMSREMWDFDSEGTGDILFSRVINGFLPELFKRWANSEAKHLVTIVLFTRVEYDVSAIGAPLPLSSETLRCISSPNHVPTRDFYRVVVNDMASGHWTAILDELKKDFRTFLRDVSTLKMDCADTPTLDGVKVAPKNKAATIAGRPSTALRGNILEAIHLASAHLAYDHIDRDMVHTGTSIIVITPGSGVFEVSYESLSSTSEALANRGIAIDLVCLSPMPLHSVPLFKYKAPAQRSSSSSFCEFNSSGYSPEMRHSFSFASRTPHLSPKSAAHGSFSRGTAHKEHAASRSDEWNYGIPHWLDISYWNPDTYREARRILKKDLNAPIPFTVTKQSKTFVPRVRMYEIQMMGVMESEQSNISIPYLLEGEGIHRAPSLSLGLSPSALSSTRASYRRNPYKLPLSDSLRPEPFLQGLSNPKDVMLARSKKAPKAVLAWMEQYDDAVFQPFAKRRHQRKPSKPKRLSEPDVQVSGAHERLSARSVLRLREHETNANSSERPYPTRTIPRVAETSLSAPQTPVPSKSASPKKPALKPPSAGKAPRISRTISFALRGLSATPPRALASTEVNVEHASALPTSSPKLLPGPFPDTRSVDSFSGSDSASISTVIDTSLRPASPHKTPQSRAIMPSRPISIKVPPRQPSEDAEPGDRAVIPESYSTTSTAIPFNEHHRRDSHTRTSGPRFEMTVNGGSRDSSIKSPQNKALAPWVRSINPCNTSREVLRDTSWFGRWQHAYPRPPHVAVVKWKSLKSPAILPLTTEEFPTAKELGTDYLQTPYRVFPNDDPEGFEVPKTRGILLREMISLRLSHGFQIVIGKHVAEVSGQHALETLNVFNTASLERNGATIFLSKGNSIHRLVCVDGGEIEVTRFTHRTSSALAAGRRDGFSLYSPAMRTILSPEYELKNIKLDPTAEEYNWNYADNYVAGHRDYLFNPAQQLQFWRVRYVLIPMHLHVNTRRHLQSFNEDNEEEIHLLGINQLTHIWQRHKYIPPEEKRFESSNKKKEQNPLNIMYQTRNPSEVVAAELDRILLSDPGLDSSPAQLLPESELLKRSSISLSSLAHIIQGDKGVRMMDRRWHWRLHYNCFIGFELTTWLLQNFRDIDSREEAVDFGNELMKHGLFQHVEKRHNFRDGNYFYQISSEHRISRPESRGGWFPQKRSDKGVPSTPASNNAKDSPLSGHARSDSLEDGPPHTPATPSKSKNKATIMLSKMMKYDVDPRKRSNRPEVIDLHYDRLHNPDNCFHFELSWMNTTPKLIEDTVLSWAATAEKFGLKLVQVPIAEASAISRTQPFRKPYRVSLKIPPPKGPVPTLFNTASFSQPGFTDMHYYHKAMLRKFDFVLDFEARSAFPADVGVSYSWGTPDYQYPQYIHRSGSTLVQLTDEGDFLFLANRLVSTRAAASREMPRYERMDRAEHLRTRAATHDPLDRLSPRLSPIVRPLHEIGSPQVQSSIDSAHLYRAPELIILGFAEFCNDEGRLEQFYKESHARPVSTKVGPATTTLMDSSIPSLELPASVVSHHLSHPPALVARASVDGSISSIDVRVRARNDSVSYKGSPRSGSLRPLNLS.

Basic residues predominate over residues Met-1 to Leu-12. Disordered stretches follow at residues Met-1–Asp-48, Pro-547–Lys-566, Lys-732–Pro-822, and Ser-854–Asn-982. Positions Ala-24 to Ser-33 are enriched in polar residues. Positions His-34–Gln-47 are enriched in basic and acidic residues. The segment covering Lys-732–Lys-743 has biased composition (basic residues). Residues Ala-755–Thr-772 are compositionally biased toward basic and acidic residues. Composition is skewed to low complexity over residues Val-801–Pro-822 and Val-874–Ser-886. Over residues Asn-969–Asn-982 the composition is skewed to polar residues. The DEP domain occupies Gly-1344 to Ser-1419. Disordered regions lie at residues Arg-1425–Ala-1483 and Asn-1825–Ser-1845.

The protein belongs to the IML1 family.

The protein resides in the vacuole membrane. The sequence is that of Vacuolar membrane-associated protein iml1 (iml1) from Aspergillus clavatus (strain ATCC 1007 / CBS 513.65 / DSM 816 / NCTC 3887 / NRRL 1 / QM 1276 / 107).